The chain runs to 465 residues: Paired box protein Pax-8 (465 aa).

The paired DNA-binding region spans glycine 26 to lysine 152. Residues glycine 29–threonine 85 are PAI subdomain. Residues lysine 104–lysine 152 form an RED subdomain region. The tract at residues proline 206–aspartate 227 is disordered.

As to expression, expression starts at late gastrula stages in cells fated to become the primordia of the otic system and the pronephric kidney. Expression is maintained in these two structures through late tailbud stages. Does not appear to be expressed in the thyroid gland.

The protein resides in the nucleus. Its function is as follows. Probable transcription factor. Involved in kidney development, acting synergistically with lhx1/lim-1 to establish the pronephric primordium in late gastrulae/early neurulae. In Xenopus laevis (African clawed frog), this protein is Paired box protein Pax-8.